Here is a 201-residue protein sequence, read N- to C-terminus: Small ribosomal subunit protein uS4 (201 aa).

The 67-residue stretch at 91–157 (SRLDNVIYRA…VPFQIARETV (67 aa)) folds into the S4 RNA-binding domain.

It belongs to the universal ribosomal protein uS4 family. In terms of assembly, part of the 30S ribosomal subunit. Contacts protein S5. The interaction surface between S4 and S5 is involved in control of translational fidelity.

In terms of biological role, one of the primary rRNA binding proteins, it binds directly to 16S rRNA where it nucleates assembly of the body of the 30S subunit. Its function is as follows. With S5 and S12 plays an important role in translational accuracy. The protein is Small ribosomal subunit protein uS4 of Mycobacterium leprae (strain Br4923).